Here is a 276-residue protein sequence, read N- to C-terminus: MQHPAEHSPLGKTSEYVSSYTPSLLFPISRTAKWAELGLSAETLPYRGVDIWNCYELSWLTPAGKPVVAIGEFSIPADSPNIIESKSFKLYLNSLNQSAFDSREALRAVLQKDLSAAAGAPVGVRLRSLDEVAEEGIGRLPGRCIDELDIAVDGYEQPRPELLRCDAGRIVEEQLYSHLLKSNCPVTGQPDWGTLVVDYRGPALDPASLLAYLVSFRQHQDFHEQCVERIFLDLQRLLQPQALSVYARYVRRGGLDINPYRSLAEVAPDNRRLVRQ.

83–85 (IES) is a binding site for substrate. 85-86 (SK) is a binding site for NADPH. The Thioimide intermediate role is filled by Cys184. Catalysis depends on Asp191, which acts as the Proton donor. Substrate is bound at residue 223–224 (HE). 252–253 (RG) is a binding site for NADPH.

Belongs to the GTP cyclohydrolase I family. QueF type 2 subfamily. In terms of assembly, homodimer.

The protein resides in the cytoplasm. It carries out the reaction 7-aminomethyl-7-carbaguanine + 2 NADP(+) = 7-cyano-7-deazaguanine + 2 NADPH + 3 H(+). It functions in the pathway tRNA modification; tRNA-queuosine biosynthesis. Its function is as follows. Catalyzes the NADPH-dependent reduction of 7-cyano-7-deazaguanine (preQ0) to 7-aminomethyl-7-deazaguanine (preQ1). The sequence is that of NADPH-dependent 7-cyano-7-deazaguanine reductase from Pseudomonas aeruginosa (strain LESB58).